Consider the following 271-residue polypeptide: Acyl-[acyl-carrier-protein]--UDP-N-acetylglucosamine O-acyltransferase (271 aa).

The protein belongs to the transferase hexapeptide repeat family. LpxA subfamily. In terms of assembly, homotrimer.

Its subcellular location is the cytoplasm. The enzyme catalyses a (3R)-hydroxyacyl-[ACP] + UDP-N-acetyl-alpha-D-glucosamine = a UDP-3-O-[(3R)-3-hydroxyacyl]-N-acetyl-alpha-D-glucosamine + holo-[ACP]. The protein operates within glycolipid biosynthesis; lipid IV(A) biosynthesis; lipid IV(A) from (3R)-3-hydroxytetradecanoyl-[acyl-carrier-protein] and UDP-N-acetyl-alpha-D-glucosamine: step 1/6. Its function is as follows. Involved in the biosynthesis of lipid A, a phosphorylated glycolipid that anchors the lipopolysaccharide to the outer membrane of the cell. In Ralstonia nicotianae (strain ATCC BAA-1114 / GMI1000) (Ralstonia solanacearum), this protein is Acyl-[acyl-carrier-protein]--UDP-N-acetylglucosamine O-acyltransferase.